A 308-amino-acid chain; its full sequence is tRNA pseudouridine synthase B (308 aa).

The active-site Nucleophile is Asp-44.

This sequence belongs to the pseudouridine synthase TruB family. Type 1 subfamily.

The catalysed reaction is uridine(55) in tRNA = pseudouridine(55) in tRNA. Responsible for synthesis of pseudouridine from uracil-55 in the psi GC loop of transfer RNAs. In Nitratidesulfovibrio vulgaris (strain DSM 19637 / Miyazaki F) (Desulfovibrio vulgaris), this protein is tRNA pseudouridine synthase B.